The primary structure comprises 766 residues: Single-minded homolog 1 (766 aa).

The bHLH domain occupies 1–53; it reads MKEKSKNAARTRREKENSEFYELAKLLPLPSAITSQLDKASIIRLTTSYLKMR. 2 PAS domains span residues 77-147 and 218-288; these read GREL…QPYH and PPSA…LVKG. The 44-residue stretch at 292-335 folds into the PAC domain; sequence TKYYRFLAKHGGWVWVQSYATIVHNSRSSRPHCIVSVNYVLTDT. Residues 336–766 form the Single-minded C-terminal domain; the sequence is EYKGLQLSLD…GTSVIITNGS (431 aa). Positions 353 to 365 are enriched in polar residues; it reads AFSYTSSSTPTMT. 2 disordered regions span residues 353–431 and 528–563; these read AFSY…SQHD and WDEDSVVSSPDPGSASESGDRYRTEQYQSSPHEPSK. The short motif at 368–387 is the Nuclear localization signal element; that stretch reads RKGAKSRLSSSKSKSRTSPY. A compositionally biased stretch (low complexity) spans 373–385; that stretch reads SRLSSSKSKSRTS. Residues 394–404 are compositionally biased toward basic and acidic residues; that stretch reads HTERSESDHDS.

In terms of assembly, efficient DNA binding requires dimerization with another bHLH protein. Heterodimer; forms a heterodimer with ARNT, ARNT2.

It localises to the nucleus. Its function is as follows. Transcriptional factor that may have pleiotropic effects during embryogenesis and in the adult. The polypeptide is Single-minded homolog 1 (SIM1) (Pan paniscus (Pygmy chimpanzee)).